The chain runs to 838 residues: Probable beta-glucosidase I (838 aa).

A glycan (N-linked (GlcNAc...) asparagine) is linked at asparagine 197. Aspartate 225 is an active-site residue. One can recognise a PA14 domain in the interval 395–555; it reads DGKKGFKFRV…SQEELISKAA (161 aa). The N-linked (GlcNAc...) asparagine glycan is linked to asparagine 493.

The protein belongs to the glycosyl hydrolase 3 family.

It is found in the secreted. The catalysed reaction is Hydrolysis of terminal, non-reducing beta-D-glucosyl residues with release of beta-D-glucose.. It participates in glycan metabolism; cellulose degradation. In terms of biological role, beta-glucosidases are one of a number of cellulolytic enzymes involved in the degradation of cellulosic biomass. Catalyzes the last step releasing glucose from the inhibitory cellobiose. The protein is Probable beta-glucosidase I (bglI) of Neosartorya fischeri (strain ATCC 1020 / DSM 3700 / CBS 544.65 / FGSC A1164 / JCM 1740 / NRRL 181 / WB 181) (Aspergillus fischerianus).